The primary structure comprises 102 residues: Keratin-associated protein 25-1 (102 aa).

This sequence belongs to the PMG family. Interacts with hair keratins.

In the hair cortex, hair keratin intermediate filaments are embedded in an interfilamentous matrix, consisting of hair keratin-associated proteins (KRTAP), which are essential for the formation of a rigid and resistant hair shaft through their extensive disulfide bond cross-linking with abundant cysteine residues of hair keratins. The matrix proteins include the high-sulfur and high-glycine-tyrosine keratins. The polypeptide is Keratin-associated protein 25-1 (KRTAP25-1) (Homo sapiens (Human)).